An 83-amino-acid chain; its full sequence is Small ribosomal subunit protein uS19m (83 aa).

Belongs to the universal ribosomal protein uS19 family.

It localises to the mitochondrion. The chain is Small ribosomal subunit protein uS19m (RPS19) from Tetraselmis subcordiformis (Marine green alga).